A 133-amino-acid polypeptide reads, in one-letter code: Protein PROTON GRADIENT REGULATION 5, chloroplastic (133 aa).

A chloroplast-targeting transit peptide spans 1-60; the sequence is MAAASISAIGCNQTLIGTSFYGGWGSSISGEDYQTMLSKTVAPPQQARVSRKAIRAVPMM.

This sequence belongs to the PGR5 family. Interacts with PGRL1A and PGRL1B. Disulfide bonds; Cys-11 and Cys-105 are probably involved in the formation of disulfide bridges with 'Cys-300' and 'Cys-303' of PGRL1A. 'Cys-272' and 'Cys-275' of PGRL1A may also be used to form the disulfide bridges, but in this case the cyclic electron flow is lost.

The protein localises to the plastid. It is found in the chloroplast thylakoid membrane. Critical for growth under fluctuating-light conditions. Involved in the regulation of the cyclic electron flow (CEF) around Photosystem I. Essential for the reduction of PGRL1A by ferredoxin and for photoprotection. Contributes to maximize photosynthesis efficiency after a long dark adaptation via the regulation of non-photochemical quenching (NPQ); acts independently from DLDG1. Promotes the induction of steady-state proton motive force (pmf) and energy-dependent quenching (qE). In Arabidopsis thaliana (Mouse-ear cress), this protein is Protein PROTON GRADIENT REGULATION 5, chloroplastic.